The following is a 644-amino-acid chain: Exoribonuclease 2 (644 aa).

Residues 189-516 (RQDLTALNFV…NHRLLKAAIK (328 aa)) enclose the RNB domain. The region spanning 561 to 643 (DTRFAAEIID…ETRSIIARPV (83 aa)) is the S1 motif domain.

Belongs to the RNR ribonuclease family. RNase II subfamily.

The protein localises to the cytoplasm. The enzyme catalyses Exonucleolytic cleavage in the 3'- to 5'-direction to yield nucleoside 5'-phosphates.. In terms of biological role, involved in mRNA degradation. Hydrolyzes single-stranded polyribonucleotides processively in the 3' to 5' direction. In Escherichia fergusonii (strain ATCC 35469 / DSM 13698 / CCUG 18766 / IAM 14443 / JCM 21226 / LMG 7866 / NBRC 102419 / NCTC 12128 / CDC 0568-73), this protein is Exoribonuclease 2.